A 230-amino-acid chain; its full sequence is Vacuole-localized protein 4 (230 aa).

A signal peptide spans 1–19 (MRVSSAIFTIASGIAAVSA).

It localises to the vacuole. Functionally, vacuolar protein required for aerial conidiation and conidial maturation. Also involved in blastospore production and cell cycle. Plays a vital role in the secretion of Pr1 proteases for cuticular penetration and hence contributes significantly to host infection and virulence. The sequence is that of Vacuole-localized protein 4 from Beauveria bassiana (strain ARSEF 2860) (White muscardine disease fungus).